Here is a 175-residue protein sequence, read N- to C-terminus: uncharacterized protein (175 aa).

The HTH marR-type domain maps to 10 to 157 (LFELYAELIH…AERLFRDLVT (148 aa)). Residues 68–91 (VTSIAEKMNTTKATVSRISTKLLG) constitute a DNA-binding region (H-T-H motif).

It is found in the cytoplasm. This is an uncharacterized protein from Bacillus subtilis (strain 168).